Here is a 201-residue protein sequence, read N- to C-terminus: dITP/XTP pyrophosphatase (201 aa).

A substrate-binding site is contributed by 8 to 13; sequence TNNENK. Residues glutamate 41 and aspartate 73 each contribute to the Mg(2+) site. Aspartate 73 serves as the catalytic Proton acceptor. Substrate contacts are provided by residues serine 74, 154–157, lysine 177, and 182–183; these read FGYD and HR.

The protein belongs to the HAM1 NTPase family. Homodimer. Mg(2+) is required as a cofactor.

It catalyses the reaction XTP + H2O = XMP + diphosphate + H(+). The enzyme catalyses dITP + H2O = dIMP + diphosphate + H(+). The catalysed reaction is ITP + H2O = IMP + diphosphate + H(+). Functionally, pyrophosphatase that catalyzes the hydrolysis of nucleoside triphosphates to their monophosphate derivatives, with a high preference for the non-canonical purine nucleotides XTP (xanthosine triphosphate), dITP (deoxyinosine triphosphate) and ITP. Seems to function as a house-cleaning enzyme that removes non-canonical purine nucleotides from the nucleotide pool, thus preventing their incorporation into DNA/RNA and avoiding chromosomal lesions. The protein is dITP/XTP pyrophosphatase of Clostridium tetani (strain Massachusetts / E88).